A 677-amino-acid polypeptide reads, in one-letter code: Beta-galactosidase BgaA (677 aa).

Arg-112 serves as a coordination point for substrate. Cys-116 lines the Zn(2+) pocket. Residue Asn-150 coordinates substrate. Glu-151 (proton donor) is an active-site residue. Positions 156, 158, and 161 each coordinate Zn(2+). The active-site Nucleophile is Glu-309. Residues Trp-317 and 357–360 (EKYH) contribute to the substrate site.

This sequence belongs to the glycosyl hydrolase 42 family. In terms of assembly, dimer.

It catalyses the reaction Hydrolysis of terminal non-reducing beta-D-galactose residues in beta-D-galactosides.. With respect to regulation, no activity is lost during treatment with 20 or 100 mM EDTA in Z buffer for 3 hours at 0 degrees Celsius, nor is activity greatly stimulated by the addition of cations. Inhibited by 1 mM zinc and 1 mM copper, the levels of activity decrease to 10% of the untreated control. Nickel, cobalt and manganese at concentrations of 10 mM decrease enzyme activity to either 40% (for nickel and cobalt) or 60% (for manganese) of the activity in untreated controls. No change in enzyme activity in the presence of calcium and magnesium at concentrations up to 50 mM. EDTA-treated enzyme exhibits a slight increase in relative specific activity when it is assayed in the presence of 50 mM NaCl or 50 mM KCl, it does not exhibit enhanced activity at concentrations greater than 250 mM. Maintains between 20 and 40% of activity in the presence of 4 M NaCl or 4 M KCl, and it is more active in the presence of KCl than in the presence of NaCl. Retains 50% of activity in the presence of 3 M KCl or 2.5 M NaCl. Its function is as follows. Hydrolyzes o-nitrophenyl-beta-D-galactopyranoside (ONPG), p-nitrophenyl-beta-D-galactopyranoside (PNPG), 5-bromo-4-chloro-3-indoyl-beta-D-galactosde (X-gal), o-nitrophenyl-beta-D-fucopyranoside (ONPF) and p-nitrophenyl-beta-D-fucopyranoside (PNPF) with greatest activity towards ONPG and PNPG and low levels of activity with ONPF and PNPF. Detectable, but very low levels of activity towards p-nitrophenyl-beta-lactose (PNPL), p-nitrophenyl-beta-cellobiose (PNPC), p-nitrophenyl-alpha-galactopyranoside (PNP-alpha-G), and p-nitrophenyl-beta-xylopyranoside (PNPX). This Planococcus sp. (strain 'SOS Orange') protein is Beta-galactosidase BgaA.